Here is a 279-residue protein sequence, read N- to C-terminus: Tryptophan synthase alpha chain (279 aa).

Catalysis depends on proton acceptor residues E50 and D61.

It belongs to the TrpA family. In terms of assembly, tetramer of two alpha and two beta chains.

The enzyme catalyses (1S,2R)-1-C-(indol-3-yl)glycerol 3-phosphate + L-serine = D-glyceraldehyde 3-phosphate + L-tryptophan + H2O. It functions in the pathway amino-acid biosynthesis; L-tryptophan biosynthesis; L-tryptophan from chorismate: step 5/5. Functionally, the alpha subunit is responsible for the aldol cleavage of indoleglycerol phosphate to indole and glyceraldehyde 3-phosphate. This is Tryptophan synthase alpha chain from Brucella suis biovar 1 (strain 1330).